The chain runs to 479 residues: Sulfate adenylyltransferase subunit 1 (479 aa).

The region spanning 25–239 (KSLLRFLTCG…EVLETVDIQR (215 aa)) is the tr-type G domain. A G1 region spans residues 34–41 (GSVDDGKS). 34–41 (GSVDDGKS) provides a ligand contact to GTP. Residues 92-96 (GITID) are G2. Positions 113 to 116 (DTPG) are G3. Residues 113 to 117 (DTPGH) and 168 to 171 (NKMD) each bind GTP. A G4 region spans residues 168–171 (NKMD). Residues 206–208 (SAL) form a G5 region.

Belongs to the TRAFAC class translation factor GTPase superfamily. Classic translation factor GTPase family. CysN/NodQ subfamily. Heterodimer composed of CysD, the smaller subunit, and CysN.

It catalyses the reaction sulfate + ATP + H(+) = adenosine 5'-phosphosulfate + diphosphate. It functions in the pathway sulfur metabolism; hydrogen sulfide biosynthesis; sulfite from sulfate: step 1/3. With CysD forms the ATP sulfurylase (ATPS) that catalyzes the adenylation of sulfate producing adenosine 5'-phosphosulfate (APS) and diphosphate, the first enzymatic step in sulfur assimilation pathway. APS synthesis involves the formation of a high-energy phosphoric-sulfuric acid anhydride bond driven by GTP hydrolysis by CysN coupled to ATP hydrolysis by CysD. This is Sulfate adenylyltransferase subunit 1 from Salmonella newport (strain SL254).